A 46-amino-acid polypeptide reads, in one-letter code: Small polypeptide DEVIL 5 (46 aa).

The chain crosses the membrane as a helical span at residues 8–24 (VGGTKRKMWSRGVGGVV). A required for DVL/RTFL small polypeptide activity region spans residues 15–46 (MWSRGVGGVVREQKAKLYIIRRCVVMLLCWHD).

It belongs to the DVL/RTFL small polypeptides family. As to expression, mostly expressed in roots and flowers, and, to a lower extent, in leaves and stems.

The protein localises to the cell membrane. In terms of biological role, small polypeptide acting as a regulatory molecule which coordinates cellular responses required for differentiation, growth and development, including leaves shape, pedicule elongation, inflorescence organization and fruit maturation, probably by restricting polar cell proliferation in lateral organs and coordinating socket cell recruitment and differentiation at trichome sites. This is Small polypeptide DEVIL 5 from Arabidopsis thaliana (Mouse-ear cress).